A 283-amino-acid chain; its full sequence is Pantothenate synthetase (283 aa).

Met30–His37 provides a ligand contact to ATP. The active-site Proton donor is the His37. Gln61 contributes to the (R)-pantoate binding site. Gln61 is a beta-alanine binding site. Residue Gly149–Asp152 coordinates ATP. Gln155 contacts (R)-pantoate. Residues Val178 and Leu186–Arg189 contribute to the ATP site.

It belongs to the pantothenate synthetase family. In terms of assembly, homodimer.

It localises to the cytoplasm. It carries out the reaction (R)-pantoate + beta-alanine + ATP = (R)-pantothenate + AMP + diphosphate + H(+). The protein operates within cofactor biosynthesis; (R)-pantothenate biosynthesis; (R)-pantothenate from (R)-pantoate and beta-alanine: step 1/1. In terms of biological role, catalyzes the condensation of pantoate with beta-alanine in an ATP-dependent reaction via a pantoyl-adenylate intermediate. This Azotobacter vinelandii (strain DJ / ATCC BAA-1303) protein is Pantothenate synthetase.